The chain runs to 468 residues: Secreted triacylglycerol lipase LIP2 (468 aa).

The N-terminal stretch at 1 to 22 (MFGFRLFILAAVALAYIQCAAA) is a signal peptide. The cysteines at positions 125 and 295 are disulfide-linked. S209 serves as the catalytic Nucleophile. 3 N-linked (GlcNAc...) asparagine glycosylation sites follow: N242, N252, and N279. Active-site residues include D355 and H389.

This sequence belongs to the AB hydrolase superfamily. Lipase family. Class Lip subfamily.

Its subcellular location is the secreted. It carries out the reaction a triacylglycerol + H2O = a diacylglycerol + a fatty acid + H(+). The enzyme catalyses a monoacylglycerol + H2O = glycerol + a fatty acid + H(+). It catalyses the reaction a diacylglycerol + H2O = a monoacylglycerol + a fatty acid + H(+). Functionally, secreted lipase that hydrolyzes acylglycerol lipids such as triacylglycerols and consequently releases free fatty acid. Due to an absence of fatty acid synthase genes in Malassezia species, secretory lipases are essential for the yeast to generate free fatty acids from degradation of sebum and assimilate them as lipid sources for growth. Plays important roles not only in lipid metabolism but also in the immune response of host cells and pathogenesis. The chain is Secreted triacylglycerol lipase LIP2 from Malassezia furfur (Pityriasis versicolor infection agent).